The following is a 445-amino-acid chain: MSNRKYFGTDGIRGKVGDSPITPDFVLKLGWAAGKVLARHGSRKIIIGKDTRISGYMLESSLEAGLAAAGLSASFTGPMPTPAVAYLTRTFRAEAGIVISASHNPYYDNGIKFFSIDGTKLPDDVEEAIEAEMEKPLTCVESAELGRANRIVDAAGRYIEFCKGTFPSEQSLNGLKIVLDCANGATYHIAPNVLRELGADVVTIGCEPNGININEKCGATDVRLLQQRVVEEKADVGLAFDGDGDRVIMVDHLGQKVDGDQILYIIAREALRQGQLRGGVVGTLMSNMGLELALKQLGIPFLRAKVGDRYVLEKLQEEGWRLGAENSGHVILLDKTTTGDGIVAGLQILSAMVRNHMSLHDLCSGMKLLPQVLVNVRFSGSHDPLKSENVINITKSVETELNGRGRVLLRKSGTEPLIRVMVEGEDDVQVTALAHRIADAVKHAG.

S102 acts as the Phosphoserine intermediate in catalysis. Mg(2+) contacts are provided by S102, D241, D243, and D245. Position 102 is a phosphoserine (S102).

This sequence belongs to the phosphohexose mutase family. The cofactor is Mg(2+). Post-translationally, activated by phosphorylation.

It catalyses the reaction alpha-D-glucosamine 1-phosphate = D-glucosamine 6-phosphate. In terms of biological role, catalyzes the conversion of glucosamine-6-phosphate to glucosamine-1-phosphate. In Photorhabdus laumondii subsp. laumondii (strain DSM 15139 / CIP 105565 / TT01) (Photorhabdus luminescens subsp. laumondii), this protein is Phosphoglucosamine mutase.